Here is a 231-residue protein sequence, read N- to C-terminus: 5'-methylthioadenosine/S-adenosylhomocysteine nucleosidase (231 aa).

Residue E12 is the Proton acceptor of the active site. Substrate is bound by residues G78, M153, and 174–175 (ME). The active-site Proton donor is D198.

This sequence belongs to the PNP/UDP phosphorylase family. MtnN subfamily.

It carries out the reaction S-adenosyl-L-homocysteine + H2O = S-(5-deoxy-D-ribos-5-yl)-L-homocysteine + adenine. It catalyses the reaction S-methyl-5'-thioadenosine + H2O = 5-(methylsulfanyl)-D-ribose + adenine. The catalysed reaction is 5'-deoxyadenosine + H2O = 5-deoxy-D-ribose + adenine. It participates in amino-acid biosynthesis; L-methionine biosynthesis via salvage pathway; S-methyl-5-thio-alpha-D-ribose 1-phosphate from S-methyl-5'-thioadenosine (hydrolase route): step 1/2. Catalyzes the irreversible cleavage of the glycosidic bond in both 5'-methylthioadenosine (MTA) and S-adenosylhomocysteine (SAH/AdoHcy) to adenine and the corresponding thioribose, 5'-methylthioribose and S-ribosylhomocysteine, respectively. Also cleaves 5'-deoxyadenosine, a toxic by-product of radical S-adenosylmethionine (SAM) enzymes, into 5-deoxyribose and adenine. In Bacillus cereus (strain G9842), this protein is 5'-methylthioadenosine/S-adenosylhomocysteine nucleosidase.